We begin with the raw amino-acid sequence, 294 residues long: Ribosomal RNA small subunit methyltransferase A (294 aa).

Positions 31, 33, 58, 79, 111, and 136 each coordinate S-adenosyl-L-methionine.

Belongs to the class I-like SAM-binding methyltransferase superfamily. rRNA adenine N(6)-methyltransferase family. RsmA subfamily.

The protein localises to the cytoplasm. The catalysed reaction is adenosine(1518)/adenosine(1519) in 16S rRNA + 4 S-adenosyl-L-methionine = N(6)-dimethyladenosine(1518)/N(6)-dimethyladenosine(1519) in 16S rRNA + 4 S-adenosyl-L-homocysteine + 4 H(+). In terms of biological role, specifically dimethylates two adjacent adenosines (A1518 and A1519) in the loop of a conserved hairpin near the 3'-end of 16S rRNA in the 30S particle. May play a critical role in biogenesis of 30S subunits. This chain is Ribosomal RNA small subunit methyltransferase A, found in Lactobacillus acidophilus (strain ATCC 700396 / NCK56 / N2 / NCFM).